Consider the following 337-residue polypeptide: Glyceraldehyde-3-phosphate dehydrogenase 1 (337 aa).

NAD(+)-binding positions include 12–13 (RI), D34, and M79. D-glyceraldehyde 3-phosphate is bound by residues 151 to 153 (SCT), T182, 211 to 212 (TG), and R234. C152 functions as the Nucleophile in the catalytic mechanism. N316 is an NAD(+) binding site.

This sequence belongs to the glyceraldehyde-3-phosphate dehydrogenase family. As to quaternary structure, homotetramer.

The protein resides in the cytoplasm. The enzyme catalyses D-glyceraldehyde 3-phosphate + phosphate + NAD(+) = (2R)-3-phospho-glyceroyl phosphate + NADH + H(+). Its pathway is carbohydrate degradation; glycolysis; pyruvate from D-glyceraldehyde 3-phosphate: step 1/5. This chain is Glyceraldehyde-3-phosphate dehydrogenase 1 (GAP1), found in Giardia intestinalis (Giardia lamblia).